The following is a 383-amino-acid chain: Acetylornithine deacetylase (383 aa).

His-80 lines the Zn(2+) pocket. Residue Asp-82 is part of the active site. A Zn(2+)-binding site is contributed by Asp-112. Residue Glu-144 is part of the active site. Residues Glu-145, Glu-169, and His-355 each coordinate Zn(2+).

This sequence belongs to the peptidase M20A family. ArgE subfamily. In terms of assembly, homodimer. Zn(2+) is required as a cofactor. Co(2+) serves as cofactor. It depends on glutathione as a cofactor.

It localises to the cytoplasm. The catalysed reaction is N(2)-acetyl-L-ornithine + H2O = L-ornithine + acetate. Its pathway is amino-acid biosynthesis; L-arginine biosynthesis; L-ornithine from N(2)-acetyl-L-ornithine (linear): step 1/1. Its function is as follows. Catalyzes the hydrolysis of the amide bond of N(2)-acetylated L-amino acids. Cleaves the acetyl group from N-acetyl-L-ornithine to form L-ornithine, an intermediate in L-arginine biosynthesis pathway, and a branchpoint in the synthesis of polyamines. This is Acetylornithine deacetylase from Pectobacterium carotovorum subsp. carotovorum (strain PC1).